The sequence spans 236 residues: MKTQLYKGSSKILYSAEEDFLLIMAFSDNVTLESGEIIEISGKGVLNNNISSFLMDKLEMNGIENHFIEKINMREQLIQYVEVFPVQVIISSVACGRFVKEFGMDEGYVFDKPIIDFKVRSREFKYPIVNEYQILNFGWLTRDEIKAVKEQALRIYDFLSGLFIGVGIRLVECKLEFGRVFNGEESIIMLTDEISPDNCRLWHINSNEKLGFELLENEPNKAFESYQLIADRLKEK.

Belongs to the SAICAR synthetase family.

It catalyses the reaction 5-amino-1-(5-phospho-D-ribosyl)imidazole-4-carboxylate + L-aspartate + ATP = (2S)-2-[5-amino-1-(5-phospho-beta-D-ribosyl)imidazole-4-carboxamido]succinate + ADP + phosphate + 2 H(+). It participates in purine metabolism; IMP biosynthesis via de novo pathway; 5-amino-1-(5-phospho-D-ribosyl)imidazole-4-carboxamide from 5-amino-1-(5-phospho-D-ribosyl)imidazole-4-carboxylate: step 1/2. In Rickettsia felis (strain ATCC VR-1525 / URRWXCal2) (Rickettsia azadi), this protein is Phosphoribosylaminoimidazole-succinocarboxamide synthase.